The primary structure comprises 41 residues: DFVDAHNAARAQVGVGPVHWTVDAYARQYANDRNLVHSATR.

This sequence belongs to the CRISP family.

Its function is as follows. Probably involved in the defense reaction of plants against pathogens. The chain is Pathogenesis-related protein from Cucumis melo (Muskmelon).